The chain runs to 284 residues: Distal membrane arm assembly component 2 (284 aa).

The protein belongs to the ATP synthase subunit s family. In terms of assembly, associates with mitochondrial complex I assembly intermediates during its biogenesis.

Its function is as follows. Involved in the assembly of the mitochondrial membrane respiratory chain NADH dehydrogenase (Complex I). This is Distal membrane arm assembly component 2 from Drosophila melanogaster (Fruit fly).